The primary structure comprises 429 residues: Adenylosuccinate synthetase (429 aa).

Residues 12–18 and 40–42 each bind GTP; these read GDEGKGK and GHT. The Proton acceptor role is filled by Asp-13. Mg(2+)-binding residues include Asp-13 and Gly-40. IMP is bound by residues 13–16, 38–41, Thr-129, Arg-143, Gln-223, Thr-238, and Arg-302; these read DEGK and NAGH. The active-site Proton donor is His-41. 298–304 is a binding site for substrate; sequence TVTGRPR. Residues Arg-304, 330–332, and 412–414 each bind GTP; these read KLD and STS.

Belongs to the adenylosuccinate synthetase family. Homodimer. Mg(2+) is required as a cofactor.

It localises to the cytoplasm. It carries out the reaction IMP + L-aspartate + GTP = N(6)-(1,2-dicarboxyethyl)-AMP + GDP + phosphate + 2 H(+). It functions in the pathway purine metabolism; AMP biosynthesis via de novo pathway; AMP from IMP: step 1/2. Functionally, plays an important role in the de novo pathway of purine nucleotide biosynthesis. Catalyzes the first committed step in the biosynthesis of AMP from IMP. This Gluconobacter oxydans (strain 621H) (Gluconobacter suboxydans) protein is Adenylosuccinate synthetase.